The primary structure comprises 282 residues: Bifunctional protein FolD (282 aa).

Residues 164–166 (GRS) and Ser-189 contribute to the NADP(+) site.

This sequence belongs to the tetrahydrofolate dehydrogenase/cyclohydrolase family. Homodimer.

It carries out the reaction (6R)-5,10-methylene-5,6,7,8-tetrahydrofolate + NADP(+) = (6R)-5,10-methenyltetrahydrofolate + NADPH. The catalysed reaction is (6R)-5,10-methenyltetrahydrofolate + H2O = (6R)-10-formyltetrahydrofolate + H(+). The protein operates within one-carbon metabolism; tetrahydrofolate interconversion. Its function is as follows. Catalyzes the oxidation of 5,10-methylenetetrahydrofolate to 5,10-methenyltetrahydrofolate and then the hydrolysis of 5,10-methenyltetrahydrofolate to 10-formyltetrahydrofolate. In Lachnoclostridium phytofermentans (strain ATCC 700394 / DSM 18823 / ISDg) (Clostridium phytofermentans), this protein is Bifunctional protein FolD.